Here is a 701-residue protein sequence, read N- to C-terminus: Polyribonucleotide nucleotidyltransferase (701 aa).

Mg(2+)-binding residues include Asp485 and Asp491. The KH domain maps to 552–611; sequence PRIIKIRINPEKIRDVIGKGGAVIRALTEETGTTIDITDDGTVMIACVNAEGGELAKKRI. Residues 621 to 689 enclose the S1 motif domain; it reads GRVYDGTVLK…DKGRLRLSMK (69 aa).

This sequence belongs to the polyribonucleotide nucleotidyltransferase family. Requires Mg(2+) as cofactor.

It localises to the cytoplasm. The enzyme catalyses RNA(n+1) + phosphate = RNA(n) + a ribonucleoside 5'-diphosphate. Its function is as follows. Involved in mRNA degradation. Catalyzes the phosphorolysis of single-stranded polyribonucleotides processively in the 3'- to 5'-direction. In Nitrosospira multiformis (strain ATCC 25196 / NCIMB 11849 / C 71), this protein is Polyribonucleotide nucleotidyltransferase.